Reading from the N-terminus, the 284-residue chain is MEMO1 family protein M1425_2054 (284 aa).

The protein belongs to the MEMO1 family.

The protein is MEMO1 family protein M1425_2054 of Saccharolobus islandicus (strain M.14.25 / Kamchatka #1) (Sulfolobus islandicus).